Here is a 547-residue protein sequence, read N- to C-terminus: Vacuolar fusion protein MON1 homolog B (547 aa).

M1 is modified (N-acetylmethionine). The segment at 1-106 (MEAGGDTAAP…GGDPSDEEWR (106 aa)) is disordered. Pro residues predominate over residues 57–66 (PPSPSPPPQS). Phosphoserine occurs at positions 59 and 61.

This sequence belongs to the MON1/SAND family. In terms of assembly, interacts with CCNT2; down-regulates CCNT2-mediated activation of viral promoters during herpes simplex virus 1/HHV-1 infection. Found in a complex with RMC1, CCZ1 MON1A and MON1B.

This chain is Vacuolar fusion protein MON1 homolog B (MON1B), found in Macaca fascicularis (Crab-eating macaque).